The chain runs to 136 residues: Large ribosomal subunit protein uL16 (136 aa).

It belongs to the universal ribosomal protein uL16 family. As to quaternary structure, part of the 50S ribosomal subunit.

Its function is as follows. Binds 23S rRNA and is also seen to make contacts with the A and possibly P site tRNAs. The sequence is that of Large ribosomal subunit protein uL16 from Vibrio campbellii (strain ATCC BAA-1116).